Consider the following 227-residue polypeptide: Endolytic peptidoglycan transglycosylase RlpA (227 aa).

A signal peptide spans 1–21 (MMNHKFVLLILLIFYCFFLSG). Cys-22 is lipidated: N-palmitoyl cysteine. A lipid anchor (S-diacylglycerol cysteine) is attached at Cys-22.

This sequence belongs to the RlpA family.

The protein localises to the cell membrane. Lytic transglycosylase with a strong preference for naked glycan strands that lack stem peptides. This Rickettsia bellii (strain RML369-C) protein is Endolytic peptidoglycan transglycosylase RlpA.